Here is a 344-residue protein sequence, read N- to C-terminus: tRNA N6-adenosine threonylcarbamoyltransferase (344 aa).

The Fe cation site is built by His111 and His115. Residues 134-138 (LVSGG), Asp167, Gly180, and Asn277 contribute to the substrate site. Asp305 serves as a coordination point for Fe cation.

This sequence belongs to the KAE1 / TsaD family. Fe(2+) is required as a cofactor.

It is found in the cytoplasm. The catalysed reaction is L-threonylcarbamoyladenylate + adenosine(37) in tRNA = N(6)-L-threonylcarbamoyladenosine(37) in tRNA + AMP + H(+). Required for the formation of a threonylcarbamoyl group on adenosine at position 37 (t(6)A37) in tRNAs that read codons beginning with adenine. Is involved in the transfer of the threonylcarbamoyl moiety of threonylcarbamoyl-AMP (TC-AMP) to the N6 group of A37, together with TsaE and TsaB. TsaD likely plays a direct catalytic role in this reaction. This is tRNA N6-adenosine threonylcarbamoyltransferase from Glaesserella parasuis serovar 5 (strain SH0165) (Haemophilus parasuis).